The following is a 1111-amino-acid chain: MSKKVQAKQGTDDLVMLPKVSEDEICENLKKRYMNDFIYTNIGPVLISVNPFRNLNNSGPDFIEAYRGKHAQEVPPHVYQLAESAYRAMKNDQENQCVIISGESGAGKTEAAKLIMGYVSAISGSTEKVEYVKHVILESNPLLEAFGNAKTLRNNNSSRFGKYFEIQFDKAGDPVGGKIYNYLLEKSRVVYQNPGERNFHIFYQLLAGASAQEKRDYVLSSPESYYYLNQSQCYTVDGINDVSDYAEVRQAMDTIGLTAQEQSDIIRIVACVLHIGNIYFIEDDKGNAAIYDPNALELAASMLCIDSATLQNAILFRVINTGGAGGAGNRRSTYNVPQNVEQANGTRDALARTIYDRMFSWLVERVNQSLSYYKSPYQNVIGILDIFGFEIFEKNGFEQFCINFVNEKLQQFFIELTLKAEQEEYVREGIKWEPIKYFNNQIVCDLIEGKSPPGIFSLLDDICSTLHAQSTGTDQKFLEKMAGIYDGHLHWRGMTGAFAIKHYAGEVTYEAEGFSDKNKDTLFFDLIEAIQCSKMPFLASLFNEDTGSLQKKRPTTAGFKIKTSAGELMKALSQCTPHYIRCIKPNETKKAKDWENSRVKHQVQYLGLLENVRVRRAGFAYRNTFDKVLKRYKKLSSKTWGIWGEWKGDAIEGCKTIFQDMNLEAGQWQLGKTKVFIRHPETVFLLEEALDKKDFDCTAKIQKAFRNWKAKKHSLEQRAQIAHMFKDKKERQRNSIDRKFTSDYIDFENQFGLQEAMQNAHKKERVVFADTVIKIDRRAKQKNYEMVLTDQALYFVEKSIKKKVLVHTLIRRVGLREIKGVSISTLSDNVIVFHLPEHDQVIENDKKTEIIIVLVEYFKAIGGGSLNVQFSDRINYTLKKGEQKEISFQKSEQCPTLVVKKGGKGLIGTIASGLPSSTDSTPKNYNPNSMSQASSRPAPQQSAGRGRGMPQGAGQPQPQQPQQQQRPMPQPQQGGGARPMPQPQQGGGARPMGAPQQGGAPQQGAGRQLPQPTQQGGAPGGRGAPMGRGAPGGGPAGAGGRPLPTVAKPAPQPSRPTAKALYDYDASSTDELSFKEGDIIFIVQKDNGGWTQGELKSGQKGWAPTNYLQYN.

Residues Q9–D691 form the Myosin motor domain. Position 102–109 (G102–T109) interacts with ATP. Position 332 is a phosphoserine (S332). Residues G547–K627 are actin-binding. The TH1 domain maps to K729–G913. The interval I910–A1058 is disordered. Polar residues predominate over residues L914–N928. Low complexity-rich tracts occupy residues S929–G944, G952–P967, and P991–P1012. Residues G1017–G1040 are compositionally biased toward gly residues. The SH3 domain maps to P1053–N1111.

The protein belongs to the TRAFAC class myosin-kinesin ATPase superfamily. Myosin family. Myosin I heavy chain is single-headed. Dimer of a heavy and a light chain. Inability to self-assemble into filaments.

It is found in the cell projection. The protein resides in the pseudopodium. Its subcellular location is the cytoplasm. The protein localises to the cell cortex. Functionally, myosin is a protein that binds to actin and has ATPase activity that is activated by actin. Myosin IB may have a role in chemotaxis and aggregation; it could serve to stabilize and even retract cortical structures, such as pseudopods and lamellopods. Involved in the whole cell motility of aggregation-stages cells. Overexpression results in significant decrease in the rate of cellular translocation and fluid-phase pinocytosis and abnormalities in the normal rearrangement of the actin cytoskeleton. The sequence is that of Myosin IB heavy chain (myoB) from Dictyostelium discoideum (Social amoeba).